The primary structure comprises 157 residues: Pyruvoyl-dependent arginine decarboxylase 2 (157 aa).

Serine 43 is subject to Pyruvic acid (Ser).

Belongs to the PdaD family. Pyruvate is required as a cofactor.

The enzyme catalyses L-arginine + H(+) = agmatine + CO2. This chain is Pyruvoyl-dependent arginine decarboxylase 2 (pdaD2), found in Archaeoglobus fulgidus (strain ATCC 49558 / DSM 4304 / JCM 9628 / NBRC 100126 / VC-16).